The following is a 101-amino-acid chain: Class II hydrophobin 5 (101 aa).

Residues 1 to 15 (MQLTALLALATLAIA) form the signal peptide. 4 disulfides stabilise this stretch: Cys-33–Cys-83, Cys-44–Cys-74, Cys-45–Cys-57, and Cys-84–Cys-95.

Belongs to the cerato-ulmin hydrophobin family. As to quaternary structure, homodimer. Homodimers further self-assemble to form highly ordered films at water-air interfaces through intermolecular interactions.

The protein resides in the secreted. The protein localises to the cell wall. Its function is as follows. Aerial growth, conidiation, and dispersal of filamentous fungi in the environment rely upon a capability of their secreting small amphipathic proteins called hydrophobins (HPBs) with low sequence identity. Class I can self-assemble into an outermost layer of rodlet bundles on aerial cell surfaces, conferring cellular hydrophobicity that supports fungal growth, development and dispersal; whereas Class II form highly ordered films at water-air interfaces through intermolecular interactions but contribute nothing to the rodlet structure. This is Class II hydrophobin 5 from Trichoderma asperellum (strain ATCC 204424 / CBS 433.97 / NBRC 101777).